The following is a 96-amino-acid chain: Co-chaperonin GroES (96 aa).

Belongs to the GroES chaperonin family. Heptamer of 7 subunits arranged in a ring. Interacts with the chaperonin GroEL.

The protein localises to the cytoplasm. Together with the chaperonin GroEL, plays an essential role in assisting protein folding. The GroEL-GroES system forms a nano-cage that allows encapsulation of the non-native substrate proteins and provides a physical environment optimized to promote and accelerate protein folding. GroES binds to the apical surface of the GroEL ring, thereby capping the opening of the GroEL channel. This is Co-chaperonin GroES from Leptothrix cholodnii (strain ATCC 51168 / LMG 8142 / SP-6) (Leptothrix discophora (strain SP-6)).